The following is a 374-amino-acid chain: Ras-related GTP-binding protein B (374 aa).

Met1 bears the N-acetylmethionine mark. The span at 1–15 shows a compositional bias: basic and acidic residues; it reads MEESDSEKKTEKENV. Residues 1–30 form a disordered region; sequence MEESDSEKKTEKENVGPKVEPPLGEPEGSL. GTP-binding residues include Ser49 and Gly50. GDP contacts are provided by Gly50, Ser51, Gly52, Lys53, Thr54, Ser55, Thr69, and Thr75. 8 residues coordinate GTP: Gly52, Lys53, Thr54, Ser55, Thr69, Thr75, Gly126, and His188. GDP is bound by residues His188 and Asp191. A Glycyl lysine isopeptide (Lys-Gly) (interchain with G-Cter in ubiquitin) cross-link involves residue Lys203. The GDP site is built by Leu209 and Ile225. Ile225 is a binding site for GTP. Residues Lys281, Lys291, and Lys305 each participate in a glycyl lysine isopeptide (Lys-Gly) (interchain with G-Cter in ubiquitin) cross-link.

The protein belongs to the GTR/RAG GTP-binding protein family. As to quaternary structure, interacts with RRAGC and RRAGD; heterodimerization stabilizes RRAG proteins. The GTP-bound form of RRAGB (in complex with the GDP-bound form of RRAGC or RRAGD) interacts with RPTOR, thereby promoting recruitment of mTORC1 to the lysosomes. Component of the lysosomal folliculin complex (LFC), composed of FLCN, FNIP1 (or FNIP2), RagA/RRAGA or RagB/RRAGB GDP-bound, RagC/RRAGC or RagD/RRAGD GTP-bound, and Ragulator. Interacts with SH3BP4; the interaction with this negative regulator is most probably direct, preferentially occurs with the inactive GDP-bound form of RRAGB, is negatively regulated by amino acids and prevents interaction with RPTOR. Interacts with the GATOR1 complex; inactivates RRAGB. The Rag heterodimer interacts with SLC38A9; the probable amino acid sensor. Interacts with SESN1, SESN2 and SESN3.

It localises to the cytoplasm. The protein resides in the lysosome membrane. It catalyses the reaction GTP + H2O = GDP + phosphate + H(+). With respect to regulation, the activation of GTP-binding proteins is generally mediated by a guanine exchange factor (GEF), while inactivation through hydrolysis of bound GTP is catalyzed by a GTPase activating protein (GAP). The Ragulator complex functions as a GEF and promotes the active GTP-bound form. The GATOR1 complex functions as a GAP and stimulates RRAGB GTPase activity to turn it into its inactive GDP-bound form, preventing mTORC1 recruitment and activation. Functionally, guanine nucleotide-binding protein that plays a crucial role in the cellular response to amino acid availability through regulation of the mTORC1 signaling cascade. Forms heterodimeric Rag complexes with RagC/RRAGC or RagD/RRAGD and cycles between an inactive GDP-bound and an active GTP-bound form: RagB/RRAGB is in its active form when GTP-bound RagB/RRAGB forms a complex with GDP-bound RagC/RRAGC (or RagD/RRAGD) and in an inactive form when GDP-bound RagB/RRAGB heterodimerizes with GTP-bound RagC/RRAGC (or RagD/RRAGD). In its GTP-bound active form, promotes the recruitment of mTORC1 to the lysosomes and its subsequent activation by the GTPase RHEB. Involved in the RCC1/Ran-GTPase pathway. The polypeptide is Ras-related GTP-binding protein B (Mus musculus (Mouse)).